An 87-amino-acid polypeptide reads, in one-letter code: Large ribosomal subunit protein bL31B (87 aa).

The protein belongs to the bacterial ribosomal protein bL31 family. Type B subfamily. As to quaternary structure, part of the 50S ribosomal subunit.

The protein is Large ribosomal subunit protein bL31B of Escherichia coli O9:H4 (strain HS).